The following is a 318-amino-acid chain: Pantothenate synthetase (318 aa).

44–51 provides a ligand contact to ATP; it reads MGALHQGH. His51 serves as the catalytic Proton donor. Gln75 is a (R)-pantoate binding site. Beta-alanine is bound at residue Gln75. 161-164 serves as a coordination point for ATP; it reads GEKD. Residue Gln167 coordinates (R)-pantoate. ATP-binding positions include Val190 and 198–201; that span reads LSSR. The interval 295-318 is disordered; that stretch reads DGHPNLDSQPEPAGTDPALLPPAR.

The protein belongs to the pantothenate synthetase family. Homodimer.

The protein localises to the cytoplasm. It carries out the reaction (R)-pantoate + beta-alanine + ATP = (R)-pantothenate + AMP + diphosphate + H(+). Its pathway is cofactor biosynthesis; (R)-pantothenate biosynthesis; (R)-pantothenate from (R)-pantoate and beta-alanine: step 1/1. Catalyzes the condensation of pantoate with beta-alanine in an ATP-dependent reaction via a pantoyl-adenylate intermediate. The chain is Pantothenate synthetase from Nocardia farcinica (strain IFM 10152).